A 207-amino-acid polypeptide reads, in one-letter code: Superoxide dismutase [Mn] (207 aa).

H27, H82, D169, and H173 together coordinate Mn(2+).

The protein belongs to the iron/manganese superoxide dismutase family. It depends on Mn(2+) as a cofactor.

It carries out the reaction 2 superoxide + 2 H(+) = H2O2 + O2. Its function is as follows. Destroys superoxide anion radicals which are normally produced within the cells and which are toxic to biological systems. The chain is Superoxide dismutase [Mn] (sodA) from Yersinia enterocolitica.